The chain runs to 354 residues: Uroporphyrinogen decarboxylase (354 aa).

Residues 27-31 (RQAGR), Asp-77, Tyr-154, Ser-209, and His-327 each bind substrate.

It belongs to the uroporphyrinogen decarboxylase family. In terms of assembly, homodimer.

The protein resides in the cytoplasm. The catalysed reaction is uroporphyrinogen III + 4 H(+) = coproporphyrinogen III + 4 CO2. Its pathway is porphyrin-containing compound metabolism; protoporphyrin-IX biosynthesis; coproporphyrinogen-III from 5-aminolevulinate: step 4/4. Functionally, catalyzes the decarboxylation of four acetate groups of uroporphyrinogen-III to yield coproporphyrinogen-III. The sequence is that of Uroporphyrinogen decarboxylase from Pseudomonas syringae pv. syringae (strain B728a).